We begin with the raw amino-acid sequence, 120 residues long: MCSVEKIVRLRHNLLCHVRIHFKTKEDLDIRAFLFSLQRELHAVAFLNQGSIRTLYEKRVVDITSESVQSHAIIETARNFALPNTAEEEENMDRKPELQLSFKGSMTSKIIHIYVQPFDS.

Its subcellular location is the cytoplasm. It is found in the nucleus. This is an uncharacterized protein from Schizosaccharomyces pombe (strain 972 / ATCC 24843) (Fission yeast).